The sequence spans 217 residues: Adenylate kinase (217 aa).

10–15 (GAGKGT) contributes to the ATP binding site. Positions 30-59 (STGDMFRAAMKEGTPLGLQAKQYMDRGDLV) are NMP. AMP-binding positions include T31, R36, 57-59 (DLV), 85-88 (GFPR), and Q92. The LID stretch occupies residues 126–163 (GRRICRNCGATYHLIFHPPAKPGVCDKCGGELYQRADD). An ATP-binding site is contributed by R127. Residues C130 and C133 each contribute to the Zn(2+) site. 136–137 (TY) lines the ATP pocket. Residues C150 and C153 each coordinate Zn(2+). AMP-binding residues include R160 and R171. An ATP-binding site is contributed by Q199.

The protein belongs to the adenylate kinase family. Monomer.

The protein localises to the cytoplasm. It catalyses the reaction AMP + ATP = 2 ADP. It functions in the pathway purine metabolism; AMP biosynthesis via salvage pathway; AMP from ADP: step 1/1. In terms of biological role, catalyzes the reversible transfer of the terminal phosphate group between ATP and AMP. Plays an important role in cellular energy homeostasis and in adenine nucleotide metabolism. In Geobacillus stearothermophilus (Bacillus stearothermophilus), this protein is Adenylate kinase.